We begin with the raw amino-acid sequence, 398 residues long: Aspartate aminotransferase (398 aa).

L-aspartate contacts are provided by glycine 36, tryptophan 132, and asparagine 185. Position 248 is an N6-(pyridoxal phosphate)lysine (lysine 248). Residue arginine 376 coordinates L-aspartate.

This sequence belongs to the class-I pyridoxal-phosphate-dependent aminotransferase family. Homodimer. Requires pyridoxal 5'-phosphate as cofactor.

The protein resides in the cytoplasm. The enzyme catalyses L-aspartate + 2-oxoglutarate = oxaloacetate + L-glutamate. The chain is Aspartate aminotransferase (aspC) from Pseudomonas aeruginosa (strain ATCC 15692 / DSM 22644 / CIP 104116 / JCM 14847 / LMG 12228 / 1C / PRS 101 / PAO1).